Reading from the N-terminus, the 91-residue chain is Ice-structuring protein 2A7 (91 aa).

The signal sequence occupies residues 1–21 (MALSLFTVGQLIFLFWTMRIT). A propeptide spans 22-39 (EANPDPAAKAVPAAAAPD) (removed by a dipeptidylpeptidase).

Belongs to the type-I AFP family. Detected in blood serum (at protein level).

The protein resides in the secreted. Functionally, contributes to protect fish blood from freezing at subzero sea water temperatures. Lowers the blood freezing point. Binds to nascent ice crystals and prevents further growth. This Pseudopleuronectes americanus (Winter flounder) protein is Ice-structuring protein 2A7.